A 265-amino-acid chain; its full sequence is Aquaporin-5 (265 aa).

Residues 1–12 are Cytoplasmic-facing; that stretch reads MKKEVCSVAFLK. The chain crosses the membrane as a helical span at residues 13–33; that stretch reads AVFAEFLATLIFVFFGLGSAL. At 34–39 the chain is on the extracellular side; that stretch reads KWPSAL. Residues 40–60 form a helical membrane-spanning segment; sequence PTILQIALAFGLAIGTLAQAL. At 61–65 the chain is on the cytoplasmic side; it reads GPVSG. Residues 66–74 constitute an intramembrane region (discontinuously helical); the sequence is GHINPAITL. The NPA 1 signature appears at 69–71; the sequence is NPA. Residues 75-87 lie on the Cytoplasmic side of the membrane; that stretch reads ALLVGNQISLLRA. A helical transmembrane segment spans residues 88–108; the sequence is FFYVAAQLVGAIAGAGILYGV. The Extracellular segment spans residues 109 to 126; sequence APLNARGNLAVNALNNNT. N-linked (GlcNAc...) asparagine glycosylation is found at Asn124 and Asn125. A helical membrane pass occupies residues 127–147; sequence TQGQAMVVELILTFQLALCIF. At 148–158 the chain is on the cytoplasmic side; it reads ASTDSRRTSPV. Residues 159-179 form a helical membrane-spanning segment; that stretch reads GSPALSIGLSVTLGHLVGIYF. Residue Thr180 is a topological domain, extracellular. Residues 181-191 constitute an intramembrane region (discontinuously helical); the sequence is GCSMNPARSFG. The NPA 2 motif lies at 185–187; that stretch reads NPA. The Extracellular segment spans residues 192 to 203; that stretch reads PAVVMNRFSPAH. The chain crosses the membrane as a helical span at residues 204-224; sequence WVFWVGPIVGAVLAAILYFYL. At 225 to 265 the chain is on the cytoplasmic side; that stretch reads LFPNSLSLSERVAIIKGTYEPDEDWEEQREERKKTMELTTR.

It belongs to the MIP/aquaporin (TC 1.A.8) family. In terms of assembly, homotetramer; each monomer provides an independent water pore. Interacts with TRPV4; the interaction is probably indirect and regulates TRPV4 activation by hypotonicity. Detected in skin eccrine sweat glands, at the apical cell membrane and at intercellular canaliculi (at protein level).

Its subcellular location is the apical cell membrane. The protein localises to the cell membrane. It is found in the cytoplasmic vesicle membrane. The enzyme catalyses H2O(in) = H2O(out). Functionally, aquaporins form homotetrameric transmembrane channels, with each monomer independently mediating water transport across the plasma membrane along its osmotic gradient. Plays an important role in fluid secretion in salivary glands. Required for TRPV4 activation by hypotonicity. Together with TRPV4, controls regulatory volume decrease in salivary epithelial cells. Seems to play a redundant role in water transport in the eye, lung and in sweat glands. In Homo sapiens (Human), this protein is Aquaporin-5.